Reading from the N-terminus, the 593-residue chain is La-related protein 7 (593 aa).

Positions 1-11 (MTAIETDTPSN) are enriched in polar residues. A disordered region spans residues 1-28 (MTAIETDTPSNKVKEDESTDLRKDREKK). Residues 12 to 24 (KVKEDESTDLRKD) are compositionally biased toward basic and acidic residues. Positions 30-121 (RSRVKQLLAD…RRRFPLGEKP (92 aa)) constitute an HTH La-type RNA-binding domain. In terms of domain architecture, RRM spans 127-205 (RTVYVELLPK…PRKAGMFPKT (79 aa)). Positions 191 to 363 (PPEEAPRKAG…STEEEKDAVD (173 aa)) are disordered. Basic residues predominate over residues 231 to 240 (KKKKKKKSKA). Positions 248–259 (AEEDTKEQDMDI) are enriched in acidic residues. 3 stretches are compositionally biased toward basic and acidic residues: residues 295-307 (ERAE…EKVR), 314-340 (SSSE…DEKP), and 348-363 (QECK…DAVD). Residues 461-574 (QFVCGVIGKI…TEKLIAKAEK (114 aa)) form the xRRM domain.

The protein belongs to the LARP7 family. In terms of assembly, core component of the 7SK RNP complex. Associates with box C/D small nucleolar ribonucleoprotein (snoRNP) complexes.

It is found in the nucleus. Its subcellular location is the nucleoplasm. In terms of biological role, RNA-binding protein that specifically binds distinct small nuclear RNA (snRNAs) and regulates their processing and function. Specifically binds the 7SK snRNA (7SK RNA) and acts as a core component of the 7SK ribonucleoprotein (RNP) complex, thereby acting as a negative regulator of transcription elongation by RNA polymerase II. The 7SK RNP complex sequesters the positive transcription elongation factor b (P-TEFb) in a large inactive 7SK RNP complex preventing RNA polymerase II phosphorylation and subsequent transcriptional elongation. The 7SK RNP complex also promotes snRNA gene transcription by RNA polymerase II via interaction with the little elongation complex (LEC). LARP7 specifically binds to the highly conserved 3'-terminal U-rich stretch of 7SK RNA; on stimulation, remains associated with 7SK RNA, whereas P-TEFb is released from the complex. LARP7 also acts as a regulator of mRNA splicing fidelity by promoting U6 snRNA processing. Specifically binds U6 snRNAs and associates with a subset of box C/D RNP complexes: promotes U6 snRNA 2'-O-methylation by facilitating U6 snRNA loading into box C/D RNP complexes. U6 snRNA 2'-O-methylation is required for mRNA splicing fidelity. The sequence is that of La-related protein 7 from Xenopus tropicalis (Western clawed frog).